The following is a 152-amino-acid chain: Large ribosomal subunit protein bL9 (152 aa).

This sequence belongs to the bacterial ribosomal protein bL9 family.

Its function is as follows. Binds to the 23S rRNA. In Acaryochloris marina (strain MBIC 11017), this protein is Large ribosomal subunit protein bL9.